The chain runs to 92 residues: C-C motif chemokine 5 (92 aa).

The first 23 residues, 1-23, serve as a signal peptide directing secretion; that stretch reads MKVSTAAFAVLLTAAAFCTPASA. Disulfide bonds link Cys33/Cys57 and Cys34/Cys73.

It belongs to the intercrine beta (chemokine CC) family.

Its subcellular location is the secreted. Functionally, chemoattractant for blood monocytes, memory T-helper cells and eosinophils. Causes the release of histamine from basophils and activates eosinophils. May activate several chemokine receptors including CCR1, CCR3, CCR4 and CCR5. May also be an agonist of the G protein-coupled receptor GPR75. Together with GPR75, may play a role in neuron survival through activation of a downstream signaling pathway involving the PI3, Akt and MAP kinases. By activating GPR75 may also play a role in insulin secretion by islet cells. This is C-C motif chemokine 5 (CCL5) from Felis catus (Cat).